A 410-amino-acid chain; its full sequence is Ribosomal RNA large subunit methyltransferase G (410 aa).

This sequence belongs to the methyltransferase superfamily. RlmG family.

Its subcellular location is the cytoplasm. The catalysed reaction is guanosine(1835) in 23S rRNA + S-adenosyl-L-methionine = N(2)-methylguanosine(1835) in 23S rRNA + S-adenosyl-L-homocysteine + H(+). In terms of biological role, specifically methylates the guanine in position 1835 (m2G1835) of 23S rRNA. This is Ribosomal RNA large subunit methyltransferase G from Alteromonas mediterranea (strain DSM 17117 / CIP 110805 / LMG 28347 / Deep ecotype).